A 209-amino-acid chain; its full sequence is Max dimerization protein 4 (209 aa).

An interaction with SIN3A and SIN3B region spans residues 6–23 (LLILLEAAEYLERRDREA). Residues 53-105 (NNRSSHNELEKHRRAKLRLYLEQLKQLVPLGPDSTRHTTLSLLKRAKVHIKKL) enclose the bHLH domain. The tract at residues 140–209 (RVRTDSTGSA…CRRLGRPALS (70 aa)) is disordered. Positions 153–163 (DDSEQEVDIEG) are enriched in acidic residues. Over residues 199-209 (HCRRLGRPALS) the composition is skewed to basic residues.

In terms of assembly, efficient DNA binding requires dimerization with another bHLH protein. Binds DNA as a heterodimer with MAX. Interacts with SIN3A AND SIN3B. Interacts with RNF17.

The protein localises to the nucleus. Functionally, transcriptional repressor. Binds with MAX to form a sequence-specific DNA-binding protein complex which recognizes the core sequence 5'-CAC[GA]TG-3'. Antagonizes MYC transcriptional activity by competing for MAX and suppresses MYC dependent cell transformation. The polypeptide is Max dimerization protein 4 (MXD4) (Homo sapiens (Human)).